The chain runs to 567 residues: Polyadenylate-binding protein-interacting protein 7 (567 aa).

The segment at methionine 1 to leucine 22 is disordered. Over residues serine 13–leucine 22 the composition is skewed to polar residues. Residues threonine 21–proline 31 carry the PAM2-like motif. The CUE domain occupies aspartate 215 to leucine 259. The disordered stretch occupies residues arginine 355 to serine 387. Polar residues predominate over residues alanine 359–alanine 371. The Smr domain maps to isoleucine 485–tyrosine 567.

As to quaternary structure, interacts with MPC and PAB2. Expressed in cauline leaves, stems, rosette leaves, immature siliques and primary inflorescences.

The polypeptide is Polyadenylate-binding protein-interacting protein 7 (CID7) (Arabidopsis thaliana (Mouse-ear cress)).